The following is a 136-amino-acid chain: MAKAIPKKGSRGRISSRKSIRKIPKGVIHIQASFNNTIVTVTDVRGRVVSWSSAGTCGFQGTRRGTPFAAQTAAANAIRAVVDQGMQRAEVMIKGPGLGRDAALRAIRRSGILLTFVRDVTPMPHNGCRPPKKRRV.

This sequence belongs to the universal ribosomal protein uS11 family. As to quaternary structure, part of the 30S ribosomal subunit.

The protein resides in the plastid. It is found in the chloroplast. The chain is Small ribosomal subunit protein uS11c from Helianthus annuus (Common sunflower).